We begin with the raw amino-acid sequence, 131 residues long: Urease subunit beta (131 aa).

The tract at residues 100 to 131 (PLDPAAGVTSDEDAASAVVPRGAETSEREARA) is disordered.

The protein belongs to the urease beta subunit family. As to quaternary structure, heterotrimer of UreA (gamma), UreB (beta) and UreC (alpha) subunits. Three heterotrimers associate to form the active enzyme.

It localises to the cytoplasm. It catalyses the reaction urea + 2 H2O + H(+) = hydrogencarbonate + 2 NH4(+). Its pathway is nitrogen metabolism; urea degradation; CO(2) and NH(3) from urea (urease route): step 1/1. The polypeptide is Urease subunit beta (Kocuria rhizophila (strain ATCC 9341 / DSM 348 / NBRC 103217 / DC2201)).